The following is a 433-amino-acid chain: Glutamyl-tRNA reductase (433 aa).

Substrate is bound by residues 49-52, S114, 119-121, and Q125; these read TCNR and EPQ. C50 (nucleophile) is an active-site residue. An NADP(+)-binding site is contributed by 201–206; sequence GAGETI.

It belongs to the glutamyl-tRNA reductase family. As to quaternary structure, homodimer.

It carries out the reaction (S)-4-amino-5-oxopentanoate + tRNA(Glu) + NADP(+) = L-glutamyl-tRNA(Glu) + NADPH + H(+). Its pathway is porphyrin-containing compound metabolism; protoporphyrin-IX biosynthesis; 5-aminolevulinate from L-glutamyl-tRNA(Glu): step 1/2. Catalyzes the NADPH-dependent reduction of glutamyl-tRNA(Glu) to glutamate 1-semialdehyde (GSA). In Histophilus somni (strain 129Pt) (Haemophilus somnus), this protein is Glutamyl-tRNA reductase.